The primary structure comprises 644 residues: Forkhead box protein O (644 aa).

The segment at 39-75 (FEPQTRARSNTWPCPRPENFVEPPDELDSTKASNQQL) is disordered. Threonine 49 bears the Phosphothreonine; by PKB/AKT1 mark. Serine 80 carries the post-translational modification Phosphoserine. The fork-head DNA-binding region spans 100–206 (WGNLSYADLI…ETSRYEKRRG (107 aa)). Disordered regions lie at residues 187–210 (KSVRRRAASMETSRYEKRRGRAKK), 222–276 (GLND…SPIR), 329–386 (QQQQ…QTLQ), 412–435 (SPNSVTTTMSPAYPNSEPSSDSLN), and 578–612 (QQHLQQQQQHHQHQQQLLLNNNNNNNNNNSSNSSL). Position 195 is a phosphoserine; by PKB/AKT1 (serine 195). Composition is skewed to polar residues over residues 226 to 235 (ATPSPSSSVS) and 261 to 270 (RASSNASSCG). Position 264 is a phosphoserine; by PKB/AKT1 (serine 264). Phosphoserine is present on residues serine 267, serine 268, and serine 273. Residues 329 to 340 (QQQQQQQQQQQQ) are compositionally biased toward low complexity. Over residues 350–359 (SQPPPPPYQP) the composition is skewed to pro residues. Positions 360–374 (PQLQQQQQQQPSYSL) are enriched in low complexity. The span at 412–421 (SPNSVTTTMS) shows a compositional bias: polar residues.

In terms of assembly, interacts with melt.

It is found in the cytoplasm. Its subcellular location is the nucleus. Functionally, transcription factor involved in the regulation of the insulin signaling pathway. Consistently activates both the downstream target Thor\d4EBP and the feedback control target InR. Involved in negative regulation of the cell cycle, modulating cell growth and proliferation. In response to cellular stresses, such as nutrient deprivation or increased levels of reactive oxygen species, foxo is activated and inhibits growth through the action of target genes such as Thor. Foxo activated in the adult fat body can regulate lifespan in adults; an insulin peptide itself may function as one secondary messenger of insulin-regulated aging. Also regulates Lip4, homolog of human acid lipases, thereby acting as a key modulator of lipid metabolism by insulin signaling and integrates insulin responses to glucose and lipid homeostasis. This chain is Forkhead box protein O, found in Drosophila pseudoobscura pseudoobscura (Fruit fly).